The chain runs to 282 residues: Nucleotide-binding protein Fnod_1159 (282 aa).

9–16 serves as a coordination point for ATP; the sequence is GHSGAGKS. Residue 57 to 60 participates in GTP binding; sequence DIRS.

The protein belongs to the RapZ-like family.

In terms of biological role, displays ATPase and GTPase activities. This is Nucleotide-binding protein Fnod_1159 from Fervidobacterium nodosum (strain ATCC 35602 / DSM 5306 / Rt17-B1).